The following is a 638-amino-acid chain: 1-deoxy-D-xylulose-5-phosphate synthase (638 aa).

Residues His79 and 120–122 (AHS) each bind thiamine diphosphate. Asp151 contributes to the Mg(2+) binding site. Thiamine diphosphate is bound by residues 152–153 (GA), Asn180, Tyr289, and Glu371. Residue Asn180 coordinates Mg(2+).

It belongs to the transketolase family. DXPS subfamily. Homodimer. Requires Mg(2+) as cofactor. Thiamine diphosphate serves as cofactor.

The enzyme catalyses D-glyceraldehyde 3-phosphate + pyruvate + H(+) = 1-deoxy-D-xylulose 5-phosphate + CO2. Its pathway is metabolic intermediate biosynthesis; 1-deoxy-D-xylulose 5-phosphate biosynthesis; 1-deoxy-D-xylulose 5-phosphate from D-glyceraldehyde 3-phosphate and pyruvate: step 1/1. Functionally, catalyzes the acyloin condensation reaction between C atoms 2 and 3 of pyruvate and glyceraldehyde 3-phosphate to yield 1-deoxy-D-xylulose-5-phosphate (DXP). The protein is 1-deoxy-D-xylulose-5-phosphate synthase of Rhizobium rhizogenes (strain K84 / ATCC BAA-868) (Agrobacterium radiobacter).